Consider the following 233-residue polypeptide: Movement and silencing protein TGBp1 (233 aa).

Positions 1 to 133 (MNHFINLLVA…CKLLSSLGIK (133 aa)) constitute a (+)RNA virus helicase ATP-binding domain. The (+)RNA virus helicase C-terminal domain occupies 134 to 233 (VESHRRDRDV…EFPHTTSRPQ (100 aa)).

Belongs to the Tymovirales TGBp1 protein family. As to quaternary structure, homodimer and homooligomer. Interacts with capsid protein. Interacts with host AGO1; this interaction targets the host protein for degradation, thereby suppressing the antiviral RNA silencing.

The protein localises to the host cytoplasm. Transports viral genome to neighboring plant cells directly through plasmosdesmata, without any budding. The movement protein allows efficient cell to cell propagation, by bypassing the host cell wall barrier. Increases plasmodesma size exclusion limit. Acts as a suppressor of RNA-mediated gene silencing, also known as post-transcriptional gene silencing (PTGS), a mechanism of plant viral defense that limits the accumulation of viral RNAs. This chain is Movement and silencing protein TGBp1, found in Carica papaya (Papaya).